The sequence spans 150 residues: Centrin-B (150 aa).

EF-hand domains lie at 12-46 (DQISEIKESFDMFKSDNGKLDNDQIKYAFKALGCE), 80-114 (DSMSTLEQAFKLFVKDGSGITFKDLKKVAINIGEE), and 115-150 (CSDSDLYDMIEFADTDGDGVINKSEFISLMTTKKVL). Ca(2+)-binding residues include D128, D130, D132, and E139.

It belongs to the centrin family.

It is found in the cytoplasm. Its subcellular location is the cytoskeleton. It localises to the microtubule organizing center. The protein resides in the centrosome. Plays a fundamental role in microtubule-organizing center structure and function. In Dictyostelium discoideum (Social amoeba), this protein is Centrin-B (cenB).